The primary structure comprises 492 residues: MAALGSLPTLPEGLTYDDVLLIPQRSPVRSRKAVNTSTRLSRNIHLKIPIVASNMDTVCEDKTAVTMAREGGIGILHRFCSIEEQCAMVRKVKRAQSFLIEDPRMILPSATKAEALEELNWSGRKGGVSCLMVVDDFTSRRLCGVLSKSDLIFATDSALVETLMTPVSRTVVSTNTAITLEEAREVMRTKRTSNIPLLGPKGELLYLITQSDILKLTGNRNATLDSRGRLIVGAAIGVKKEDHKRAAALVDAGADVLVVDIAHGHSDLCIDMVKALKVNPLTNKVDIIAGNIATAEAAQDLIDAGADGLKIGVGPGSICITRLVAGSGVPQLSAVMDCARVAKKHGVPCIADGGVKTAGDICKAIAAGADTVMLGNMLAGTDEAPGRVLVKDGKKVKIIRGMAGFGANISKAEREKRLDEDVFNDLVPEGVEGSVPCKGPLAPILKQLVGGLRSGISYCGSHSIADMQQRARFVRMSGAGLRESGSHDISKL.

Residues 30–31 (SR) and Arg-78 each bind NADP(+). CBS domains are found at residues 99–162 (LIED…LVET) and 164–223 (MTPV…RNAT). NADP(+)-binding positions include 260–262 (DIA) and 313–314 (VG). Residues Gly-314, Gly-316, and Cys-319 each coordinate K(+). The active-site Thioimidate intermediate is the Cys-319. The active-site Proton donor/acceptor is the Thr-321. Arg-322 contacts K(+). GMP-binding positions include 352–354 (DGG), 375–376 (GN), and 401–403 (GMA). Residues Met-402 and 454-457 (SGIS) contribute to the NADP(+) site. Residues 490-492 (SKL) carry the Microbody targeting signal motif.

Belongs to the IMPDH/GMPR family. GuaC type 1 subfamily. As to quaternary structure, homotetramer.

It is found in the glycosome. The enzyme catalyses IMP + NH4(+) + NADP(+) = GMP + NADPH + 2 H(+). With respect to regulation, activated by GTP and inhibited by XMP and the IMP analogs allopurinol nucleotide and thiopurinol nucleotide. Its function is as follows. Catalyzes the irreversible NADPH-dependent deamination of GMP to IMP. It functions in the conversion of nucleobase, nucleoside and nucleotide derivatives of G to A nucleotides, and in maintaining the intracellular balance of A and G nucleotides. The chain is GMP reductase from Leishmania donovani.